The following is a 456-amino-acid chain: MKKNIGTIISISGFVLKIEFNESELPEISHALEYKTHQGTYLAEVVQHTGINTVSAIAIGEVSGLARGAEVINLGHPIEVPVGETVQGRMLNVYGKAIDGLPEPEAEVKWPIFREQPLLRELDTNKEILYTGIKVIDLICPILKGGKTGLFGGAGVGKSVLMQELINNISMMGGNSVFTGVGERVREGIGLYNELESSGVLPQTTVVLGQMNESPGVRMRVALTGLTIAEYLRDEEKKDVLLFIDNVFRFIQAGSEVSSLQGKIPITGGYQSTLSKEVGDFQDRIASTKNGSITSIQCVFLPADDIDDPSAVATFSHLDSTIVLERSIAALGIFPAVNPLQSFSRALNPTFVGERHYQLAVQVKFILQRYMELQEIINVLGMAELSDEDKKLVHRARKIRNFLSQPFYVSEKFTGTEGIFVEIEDLLSSVERILNGEYDERSEREFLFIGSYKDLK.

Position 152–159 (152–159) interacts with ATP; that stretch reads GGAGVGKS.

It belongs to the ATPase alpha/beta chains family. In terms of assembly, F-type ATPases have 2 components, CF(1) - the catalytic core - and CF(0) - the membrane proton channel. CF(1) has five subunits: alpha(3), beta(3), gamma(1), delta(1), epsilon(1). CF(0) has three main subunits: a(1), b(2) and c(9-12). The alpha and beta chains form an alternating ring which encloses part of the gamma chain. CF(1) is attached to CF(0) by a central stalk formed by the gamma and epsilon chains, while a peripheral stalk is formed by the delta and b chains.

The protein resides in the cell membrane. It catalyses the reaction ATP + H2O + 4 H(+)(in) = ADP + phosphate + 5 H(+)(out). Functionally, produces ATP from ADP in the presence of a proton gradient across the membrane. The catalytic sites are hosted primarily by the beta subunits. The polypeptide is ATP synthase subunit beta 1 (Listeria innocua serovar 6a (strain ATCC BAA-680 / CLIP 11262)).